Here is a 159-residue protein sequence, read N- to C-terminus: Phosphopantetheine adenylyltransferase (159 aa).

Position 16 (H16) interacts with ATP. Positions 40, 72, and 86 each coordinate substrate. ATP is bound by residues 87–89, E97, and 122–128; these read GLR and YQYLSAS.

Belongs to the bacterial CoaD family. Homohexamer. The cofactor is Mg(2+).

It is found in the cytoplasm. It catalyses the reaction (R)-4'-phosphopantetheine + ATP + H(+) = 3'-dephospho-CoA + diphosphate. It participates in cofactor biosynthesis; coenzyme A biosynthesis; CoA from (R)-pantothenate: step 4/5. Reversibly transfers an adenylyl group from ATP to 4'-phosphopantetheine, yielding dephospho-CoA (dPCoA) and pyrophosphate. The sequence is that of Phosphopantetheine adenylyltransferase from Dehalococcoides mccartyi (strain CBDB1).